The chain runs to 182 residues: Plasmolipin (182 aa).

Topologically, residues 1–35 (MAEFPSKVSTRTSSPAQGAEASVSALRPDLGFVRS) are cytoplasmic. Position 9 is a phosphoserine (Ser-9). The 135-residue stretch at 32-166 (FVRSRLGALM…SAFFSYQAWR (135 aa)) folds into the MARVEL domain. A helical membrane pass occupies residues 36 to 56 (RLGALMLLQLVLGLLVWALIA). At 57–68 (DTPYHLYPAYGW) the chain is on the extracellular side. The helical transmembrane segment at 69–89 (VMFVAVFLWLVTIVLFNLYLF) threads the bilayer. The Cytoplasmic portion of the chain corresponds to 90–99 (QLHMKLYMVP). The helical transmembrane segment at 100–120 (WPLVLMIFNISATVLYITAFI) threads the bilayer. The Extracellular segment spans residues 121–141 (ACSAAVDLTSLRGTRPYNQRA). The chain crosses the membrane as a helical span at residues 142–162 (AASFFACLVMIAYGVSAFFSY). Residues 163-182 (QAWRGVGSNAATSQMAGGYA) are Cytoplasmic-facing.

The protein belongs to the MAL family. Forms oligomers. Phosphorylated.

The protein localises to the cell membrane. The protein resides in the myelin membrane. Its subcellular location is the apical cell membrane. It localises to the golgi apparatus. Main component of the myelin sheath that plays an important role in myelin membrane biogenesis and myelination. Plays an essential function in apical endocytosis. Regulates epithelial development through the regulation of apical endocytosis. Part of the intracellular machinery that mediates basolateral-to-apical transport of ICAM-1, an essential adhesion receptor in epithelial cells, from the subapical compartment in hepatic epithelial cells. This chain is Plasmolipin, found in Homo sapiens (Human).